The following is a 212-amino-acid chain: Pyrrolidone-carboxylate peptidase (212 aa).

Residues Glu-78, Cys-141, and His-165 contribute to the active site.

The protein belongs to the peptidase C15 family. In terms of assembly, homotetramer.

Its subcellular location is the cytoplasm. The catalysed reaction is Release of an N-terminal pyroglutamyl group from a polypeptide, the second amino acid generally not being Pro.. Functionally, removes 5-oxoproline from various penultimate amino acid residues except L-proline. This Staphylococcus aureus (strain Mu3 / ATCC 700698) protein is Pyrrolidone-carboxylate peptidase.